Consider the following 207-residue polypeptide: Urease accessory protein UreG (207 aa).

14 to 21 (GPVGSGKT) provides a ligand contact to GTP.

It belongs to the SIMIBI class G3E GTPase family. UreG subfamily. As to quaternary structure, homodimer. UreD, UreF and UreG form a complex that acts as a GTP-hydrolysis-dependent molecular chaperone, activating the urease apoprotein by helping to assemble the nickel containing metallocenter of UreC. The UreE protein probably delivers the nickel.

It is found in the cytoplasm. Facilitates the functional incorporation of the urease nickel metallocenter. This process requires GTP hydrolysis, probably effectuated by UreG. This chain is Urease accessory protein UreG, found in Pseudomonas entomophila (strain L48).